The following is a 668-amino-acid chain: Protein ENTREP3 (668 aa).

A run of 3 helical transmembrane segments spans residues leucine 34–valine 54, serine 67–tryptophan 87, and phenylalanine 91–alanine 111. Asparagine 160 is a glycosylation site (N-linked (GlcNAc...) asparagine). Residues leucine 174–valine 194 traverse the membrane as a helical segment. Phosphoserine occurs at positions 358 and 389. Disordered regions lie at residues phenylalanine 386–alanine 419, arginine 442–threonine 503, and serine 550–alanine 570. The span at alanine 398 to proline 407 shows a compositional bias: low complexity. The residue at position 493 (serine 493) is a Phosphoserine. Serine 574 carries the post-translational modification Phosphoserine. Disordered stretches follow at residues lysine 597 to proline 620 and glycine 645 to leucine 668. Positions histidine 655 to leucine 668 are enriched in polar residues.

The protein belongs to the ENTREP family. In terms of assembly, may interact with WWOX. In terms of tissue distribution, widely expressed.

Its subcellular location is the membrane. The polypeptide is Protein ENTREP3 (Homo sapiens (Human)).